A 445-amino-acid chain; its full sequence is Rab GDP dissociation inhibitor beta (445 aa).

At M1 the chain carries N-acetylmethionine. At K112 the chain carries N6-acetyllysine. Phosphoserine is present on S130. At K269 the chain carries N6-acetyllysine. Position 382 is a phosphoserine (S382).

This sequence belongs to the Rab GDI family. Interacts with RHOH. Interacts with the GDP-bound inactive forms of RAB3A, RAB3B, RAB3C, RAB5A, RAB5B, RAB5C, RAB8A, RAB8B, RAB10, RAB12, RAB35, and RAB43; binds RAB3D to a lesser extent. Interacts with DZIP1; this interaction negatively regulates the interaction of GDI2 with GDP-bound RAB8A.

It is found in the cytoplasm. It localises to the membrane. The protein resides in the golgi apparatus. The protein localises to the trans-Golgi network. GDP-dissociation inhibitor preventing the GDP to GTP exchange of most Rab proteins. By keeping these small GTPases in their inactive GDP-bound form regulates intracellular membrane trafficking. Negatively regulates protein transport to the cilium and ciliogenesis through the inhibition of RAB8A. This is Rab GDP dissociation inhibitor beta (GDI2) from Sus scrofa (Pig).